The following is a 343-amino-acid chain: Cell division protein ZipA (343 aa).

Topologically, residues 1 to 4 (MDLN) are periplasmic. Residues 5-25 (TILIILGILALIGLVAHGIWS) form a helical membrane-spanning segment. Over 26–343 (NRREKSQYFD…MAEAAYLARV (318 aa)) the chain is Cytoplasmic. Positions 39–98 (AFHRNPQSTGRPSAQASQPMTPNFAQPAKETEQIRQTYQEPQVRQMSSSPEQQTRPTAQA) are disordered. Composition is skewed to polar residues over residues 43-62 (NPQS…TPNF) and 72-95 (IRQT…TRPT).

The protein belongs to the ZipA family. As to quaternary structure, interacts with FtsZ via their C-terminal domains.

The protein resides in the cell inner membrane. In terms of biological role, essential cell division protein that stabilizes the FtsZ protofilaments by cross-linking them and that serves as a cytoplasmic membrane anchor for the Z ring. Also required for the recruitment to the septal ring of downstream cell division proteins. In Actinobacillus succinogenes (strain ATCC 55618 / DSM 22257 / CCUG 43843 / 130Z), this protein is Cell division protein ZipA.